Here is a 273-residue protein sequence, read N- to C-terminus: Cbp/p300-interacting transactivator 2 (273 aa).

Positions D137 to M204 are disordered. Residues S165–G200 show a composition bias toward gly residues.

This sequence belongs to the CITED family. Interacts (via C-terminus) with SMAD2. Interacts (via C-terminus) with SMAD3 (via MH2 domain). Interacts with LHX2 (via LIM domains). Interacts with WT1. Interacts (via C-terminus) with EP300 (via CH1 domain); the interaction is stimulated in response to hypoxia. Interacts with PPARA. Interacts (via C-terminus) with TFAP2A, TFAP2B and TFAP2C.

The protein resides in the nucleus. Transcriptional coactivator of the p300/CBP-mediated transcription complex. Acts as a bridge, linking TFAP2 transcription factors and the p300/CBP transcriptional coactivator complex in order to stimulate TFAP2-mediated transcriptional activation. Positively regulates TGF-beta signaling through its association with the SMAD/p300/CBP-mediated transcriptional coactivator complex. Stimulates the peroxisome proliferator-activated receptors PPARA transcriptional activity. Enhances estrogen-dependent transactivation mediated by estrogen receptors. Also acts as a transcriptional corepressor; interferes with the binding of the transcription factors HIF1A or STAT2 and the p300/CBP transcriptional coactivator complex. Participates in sex determination and early gonad development by stimulating transcription activation of SRY. Plays a role in controlling left-right patterning during embryogenesis; potentiates transcriptional activation of NODAL-mediated gene transcription in the left lateral plate mesoderm (LPM). Plays an essential role in differentiation of the adrenal cortex from the adrenogonadal primordium (AGP); stimulates WT1-mediated transcription activation thereby up-regulating the nuclear hormone receptor NR5A1 promoter activity. Associates with chromatin to the PITX2 P1 promoter region. The sequence is that of Cbp/p300-interacting transactivator 2 (CITED2) from Saguinus labiatus (Red-chested mustached tamarin).